A 1103-amino-acid polypeptide reads, in one-letter code: Mediator of RNA polymerase II transcription subunit 14 (1103 aa).

2 disordered regions span residues 22 to 61 (LNGV…GSDE) and 1043 to 1067 (TTPK…PAIR). Positions 23–36 (NGVSSAPAGSSQLG) are enriched in polar residues.

This sequence belongs to the Mediator complex subunit 14 family. In terms of assembly, component of the Mediator complex.

The protein resides in the nucleus. In terms of biological role, component of the Mediator complex, a coactivator involved in the regulated transcription of nearly all RNA polymerase II-dependent genes. Mediator functions as a bridge to convey information from gene-specific regulatory proteins to the basal RNA polymerase II transcription machinery. Mediator is recruited to promoters by direct interactions with regulatory proteins and serves as a scaffold for the assembly of a functional preinitiation complex with RNA polymerase II and the general transcription factors. The chain is Mediator of RNA polymerase II transcription subunit 14 (rgr1) from Emericella nidulans (strain FGSC A4 / ATCC 38163 / CBS 112.46 / NRRL 194 / M139) (Aspergillus nidulans).